Reading from the N-terminus, the 138-residue chain is MRLTQGTFSFLPDLTDEQIKKQIAYAVSQNWAINIEFTDDPHPRNNYWELWGLPLFDINDVESVMYELESCRKQHSGLYIKINAFDNTRGVESCVLSFIINRPSYEPGFELIRSEDIGRNQKYSFRSYATAKPEGSRY.

The protein belongs to the RuBisCO small chain family. As to quaternary structure, heterohexadecamer of 8 large and 8 small subunits.

The protein resides in the plastid. It localises to the chloroplast. RuBisCO catalyzes two reactions: the carboxylation of D-ribulose 1,5-bisphosphate, the primary event in carbon dioxide fixation, as well as the oxidative fragmentation of the pentose substrate in the photorespiration process. Both reactions occur simultaneously and in competition at the same active site. Although the small subunit is not catalytic it is essential for maximal activity. This chain is Ribulose bisphosphate carboxylase small subunit, found in Antithamnion sp. (Red alga).